Consider the following 573-residue polypeptide: PCNA-interacting partner (573 aa).

The interval 492–532 (TGGQVKNKPCKNVANKRSKRKQVDIQSETTNAQENEPPQKK) is disordered. The span at 515–527 (DIQSETTNAQENE) shows a compositional bias: polar residues.

It belongs to the PARI family.

The protein localises to the cytoplasm. The protein resides in the nucleus. Required to suppress inappropriate homologous recombination, thereby playing a central role DNA repair and in the maintenance of genomic stability. The protein is PCNA-interacting partner (parpbp) of Xenopus tropicalis (Western clawed frog).